Reading from the N-terminus, the 428-residue chain is Enolase (428 aa).

Q163 serves as a coordination point for (2R)-2-phosphoglycerate. E205 functions as the Proton donor in the catalytic mechanism. 3 residues coordinate Mg(2+): D242, E286, and D313. (2R)-2-phosphoglycerate is bound by residues K338, R367, S368, and K389. K338 functions as the Proton acceptor in the catalytic mechanism.

This sequence belongs to the enolase family. Requires Mg(2+) as cofactor.

Its subcellular location is the cytoplasm. It localises to the secreted. The protein localises to the cell surface. It catalyses the reaction (2R)-2-phosphoglycerate = phosphoenolpyruvate + H2O. The protein operates within carbohydrate degradation; glycolysis; pyruvate from D-glyceraldehyde 3-phosphate: step 4/5. In terms of biological role, catalyzes the reversible conversion of 2-phosphoglycerate (2-PG) into phosphoenolpyruvate (PEP). It is essential for the degradation of carbohydrates via glycolysis. The sequence is that of Enolase from Syntrophus aciditrophicus (strain SB).